The following is a 214-amino-acid chain: Ribosomal RNA small subunit methyltransferase G (214 aa).

Residues glycine 81, methionine 86, 132–133 (VE), and arginine 147 each bind S-adenosyl-L-methionine.

This sequence belongs to the methyltransferase superfamily. RNA methyltransferase RsmG family.

Its subcellular location is the cytoplasm. It carries out the reaction guanosine(527) in 16S rRNA + S-adenosyl-L-methionine = N(7)-methylguanosine(527) in 16S rRNA + S-adenosyl-L-homocysteine. Functionally, specifically methylates the N7 position of guanine in position 527 of 16S rRNA. The chain is Ribosomal RNA small subunit methyltransferase G from Ectopseudomonas mendocina (strain ymp) (Pseudomonas mendocina).